The sequence spans 25 residues: Ocellatin-P1 (25 aa).

The residue at position 25 (leucine 25) is a Leucine amide.

Expressed by the skin glands.

It is found in the secreted. In terms of biological role, antibacterial peptide that inhibits reference strains of both Gram-negative bacteria (E.coli, E.cloacae, K.pneumoniae, P.aeruginosa) and Gram-positive bacteria (S.aureus, S.epidermidis, E.faecalis, Streptococcus group B) with relatively low potencies (MIC=25-200 uM). The peptide shows very low hemolytic activity against human erythrocytes. Wheel projection demonstrates the amphipathicity of the alpha-helices is low which may explain the low antibacterial potency. The sequence is that of Ocellatin-P1 from Leptodactylus pentadactylus (Smokey jungle frog).